Consider the following 250-residue polypeptide: 26S proteasome non-ATPase regulatory subunit 8 (250 aa).

The PCI domain occupies 63–233; the sequence is HDFETFDDYI…QEKPVNLDTV (171 aa).

It belongs to the proteasome subunit S14 family.

Acts as a regulatory subunit of the 26S proteasome which is involved in the ATP-dependent degradation of ubiquitinated proteins. The chain is 26S proteasome non-ATPase regulatory subunit 8 from Caenorhabditis elegans.